We begin with the raw amino-acid sequence, 387 residues long: MNIHEYQAKAIFADNGILTLKGKVAFSVDEAVSNAKELGGSVWAVKAQIHAGGRGLGGGVKIAKNLDEVKDYASKILGMNLVTHQTGPEGKLVQKLYIESGANIVKEYYLAILFNRMAEQITIIASSEGGMDIEKVAKESPGKIAKVGIDPQIGFKMFHGLEVARVLGLDKDEGKKLISMIAKLYKLYMDKDMNMLEINPLIKTAEGDFYALDAKCSFDDSALYRHPEIAELRDITEENPAEREAAEFGLSYVKLDGDVACMVNGAGLAMATMDIINYSGAKPANFLDVGGGASPETVAKAFEIILRDKNVKVIFINIFGGIVRCDRIANGILEATKNVEVNIPIVVRLDGTNAAEAKTILDNSNLKNIKAATNLKNGAELVKSLVG.

Residues Lys46, 53–55 (GRG), Glu99, Ala102, and Glu107 each bind ATP. Asn199 and Asp213 together coordinate Mg(2+). Substrate-binding positions include Asn264 and 321–323 (GIV).

It belongs to the succinate/malate CoA ligase beta subunit family. Heterotetramer of two alpha and two beta subunits. Mg(2+) serves as cofactor.

It catalyses the reaction succinate + ATP + CoA = succinyl-CoA + ADP + phosphate. It carries out the reaction GTP + succinate + CoA = succinyl-CoA + GDP + phosphate. Its pathway is carbohydrate metabolism; tricarboxylic acid cycle; succinate from succinyl-CoA (ligase route): step 1/1. Its function is as follows. Succinyl-CoA synthetase functions in the citric acid cycle (TCA), coupling the hydrolysis of succinyl-CoA to the synthesis of either ATP or GTP and thus represents the only step of substrate-level phosphorylation in the TCA. The beta subunit provides nucleotide specificity of the enzyme and binds the substrate succinate, while the binding sites for coenzyme A and phosphate are found in the alpha subunit. The sequence is that of Succinate--CoA ligase [ADP-forming] subunit beta from Campylobacter jejuni subsp. doylei (strain ATCC BAA-1458 / RM4099 / 269.97).